We begin with the raw amino-acid sequence, 256 residues long: Probable cyclic nucleotide phosphodiesterase Fisuc_1441/FSU_1912 (256 aa).

Fe cation contacts are provided by aspartate 20, histidine 22, aspartate 59, asparagine 89, histidine 156, histidine 196, and histidine 198. AMP is bound by residues histidine 22, aspartate 59, and 89 to 90; that span reads NH. Histidine 198 is a binding site for AMP.

Belongs to the cyclic nucleotide phosphodiesterase class-III family. Fe(2+) is required as a cofactor.

The protein is Probable cyclic nucleotide phosphodiesterase Fisuc_1441/FSU_1912 of Fibrobacter succinogenes (strain ATCC 19169 / S85).